We begin with the raw amino-acid sequence, 376 residues long: MSQDYYQILGVSKTANSADLKKAYHKLAKQYHPDNAASGDTNAEKKFKEINAAYEVLKDEQKRAAYDRFGHDAFQNQQARGGAGSQGGHPFGADINDIFGDFFSDFMGGGGRRKPTSSKVRGSDLKYNLTINLEEAFHGVEKNISFSSEVKCDTCHGSGSEKGETTTTCDACGGVGATRVQQGFFMIEQTCHKCQGNGQIIKNPCKKCHGLGRYHKQRNLSVNIPAGVENGTRIRHPGEGEAGIRGGNNGDLYVDIAIKPHDIYKVDGANLHCKLPISFVNAALGGEVAVPVIEGGKVNLTIPAGTQNGDQLRLCGKGMSKIRSTIRGDMLAHVHVEVPKNLSKRQRELLEELRGESANEKENDGSFFNKMKSLWS.

The 67-residue stretch at Asp-4–Gly-70 folds into the J domain. A CR-type zinc finger spans residues Gly-139 to Gln-217. Zn(2+) is bound by residues Cys-152, Cys-155, Cys-169, Cys-172, Cys-191, Cys-194, Cys-205, and Cys-208. 4 CXXCXGXG motif repeats span residues Cys-152–Gly-159, Cys-169–Gly-176, Cys-191–Gly-198, and Cys-205–Gly-212.

It belongs to the DnaJ family. In terms of assembly, homodimer. The cofactor is Zn(2+).

The protein resides in the cytoplasm. Functionally, participates actively in the response to hyperosmotic and heat shock by preventing the aggregation of stress-denatured proteins and by disaggregating proteins, also in an autonomous, DnaK-independent fashion. Unfolded proteins bind initially to DnaJ; upon interaction with the DnaJ-bound protein, DnaK hydrolyzes its bound ATP, resulting in the formation of a stable complex. GrpE releases ADP from DnaK; ATP binding to DnaK triggers the release of the substrate protein, thus completing the reaction cycle. Several rounds of ATP-dependent interactions between DnaJ, DnaK and GrpE are required for fully efficient folding. Also involved, together with DnaK and GrpE, in the DNA replication of plasmids through activation of initiation proteins. This chain is Chaperone protein DnaJ, found in Rickettsia bellii (strain RML369-C).